The sequence spans 106 residues: A-type ATP synthase subunit F (106 aa).

This sequence belongs to the V-ATPase F subunit family. Has multiple subunits with at least A(3), B(3), C, D, E, F, H, I and proteolipid K(x).

Its subcellular location is the cell membrane. Its function is as follows. Component of the A-type ATP synthase that produces ATP from ADP in the presence of a proton gradient across the membrane. The protein is A-type ATP synthase subunit F of Methanothermobacter thermautotrophicus (strain ATCC 29096 / DSM 1053 / JCM 10044 / NBRC 100330 / Delta H) (Methanobacterium thermoautotrophicum).